A 64-amino-acid polypeptide reads, in one-letter code: Lantibiotic actagardine (64 aa).

A propeptide spanning residues 1-45 is cleaved from the precursor; that stretch reads MSALAIEKSWKDVDLRDGATSHPAGLGFGELTFEDLREDRTIYAA. Residues 46–51 constitute a cross-link (lanthionine (Ser-Cys)); that stretch reads SSGWVC. 2 consecutive cross-links (beta-methyllanthionine (Thr-Cys)) follow at residues 52 to 57 and 54 to 62; these read TLTIEC and TIECGTVIC. A cross-link (beta-methyllanthionine sulfoxide (Thr-Cys)) is located at residues 59-64; it reads TVICAC.

This sequence belongs to the type B lantibiotic family. Post-translationally, maturation of lantibiotics involves the enzymatic conversion of Thr, and Ser into dehydrated AA by the enzyme garM and the formation of thioether bonds with cysteine. The 59-64 beta-methyllanthionine thioether bond is oxidized to a sulfoxide by the monooxygenase GarO. This is followed by membrane translocation and cleavage of the modified precursor. The sulfoxide group of the 59-64 beta-methyllanthionine thioether bond is mildly important for activity, since the antibacterial activity of deoxyactagardine is marginally lower compared with oxidized actagardine.

Functionally, has potent antibacterial activity against some Gram-positive bacteria. Has good antistreptococcal activity. Inhibits cell wall biosynthesis by binding to lipid II and blocking transglycosylation. This chain is Lantibiotic actagardine, found in Actinoplanes garbadinensis.